A 425-amino-acid polypeptide reads, in one-letter code: Sodium-dependent glucose transporter 1A (425 aa).

The next 11 membrane-spanning stretches (helical) occupy residues 35 to 55 (LIFV…GVLF), 61 to 81 (FFLL…IPFC), 84 to 104 (AVLL…VDTG), 123 to 143 (ALHF…KLAW), 183 to 203 (WAYA…FGLF), 228 to 248 (ALLC…ITYG), 271 to 291 (SIFW…ATFL), 294 to 314 (GTMI…LVLF), 320 to 340 (CLWI…PSGI), 355 to 375 (AFFV…IGIL), and 382 to 402 (LPVV…LFPV).

Belongs to the major facilitator superfamily.

The protein localises to the apical cell membrane. Functionally, may function as a sodium-dependent glucose transporter. Potential channels for urea in the inner medulla of kidney. The sequence is that of Sodium-dependent glucose transporter 1A from Mus musculus (Mouse).